Here is a 141-residue protein sequence, read N- to C-terminus: Large-conductance mechanosensitive channel (141 aa).

2 helical membrane passes run 16–36 (VIDLAVGVIIGGAFGKIVDSL) and 83–103 (GAFINTTIDFLIIALAIFVAI).

This sequence belongs to the MscL family. In terms of assembly, homopentamer.

The protein localises to the cell inner membrane. Channel that opens in response to stretch forces in the membrane lipid bilayer. May participate in the regulation of osmotic pressure changes within the cell. This Azoarcus sp. (strain BH72) protein is Large-conductance mechanosensitive channel.